Here is a 1794-residue protein sequence, read N- to C-terminus: MILKSFLLGNLLSLCMKIRNSVVVVGLYYGFITTFSIGPSYLFLLRARVMEEGTEKEVSATTGFIMGQFMMLISIYYTPLHLALGRPHTITVLVLPYLLFHFFWNNHKHFFSYRSTTRNSMRNLSIQCVFLNNLIFQLFNHFILPSSTLARLVNIYMFRCNNKMLFVTSSFVGWLIGHILFMKWVGLVLFWIRQNHSIRSNKYIKYLVSELRKSMARILSILLFITCVYYLGRIPSPIFTKKLKETSETGETEEETDVEIERTSETKGTEQEKEGSTEEDPSLFCSEEKGDPDKIDEREGVNGKEKTKDHFNLKERWYNNKTVYRDQEDNTAYGDGNQEDWELKALKLKEEKKLFWFEKPFITFLFDYQRWNRPFRYIENDQFANTVRNEMSQYFFNTCPSDGKRVISFTYPPSLSVFGEMIQKKMSLCGMKELYPKDKNLYNHWVSTNEQKRDKVSKEFINRIEALYGGDIVLQKRVRLCNDRDEKECLPKMSDPFLNGSYRGTIKELYSNSIINDPITSTYNSGEKFWINRIHSLLFCDLNDQAIRNKSSEIQEIKKKIPQRLYRLTTDLEQDEGEDERESVEFPEIRSRKTKHMVIYADNEENTNIFTHTGAGTTYDPENDQMEEVDVIRYTQKPDFRRDLIKGSMRAQRRKTVTWEMLQINLHSPLFLDRIDKNPFFYFDISRIINLIFRDWTKKKPEFQTSNFKEETKKEDEIEETWETIAFGQVIRGFLLVTQSILRKYIVLPSLIIAKNLVRMLLFQLPEWYEDFKEWSREMHIKCTYHGVQLSERKFPKNWLKAGIQIKILFPFYLKPWRKSKLRSHHIDHPMKKRKKQNSCFLTVWGMETDLPFGPARKGPSFFEPIHKELEKKFKKGKKKWFLFVRIFKEKKIWVIKRVLFIKGVMKELTKANPVFLFGLKRVYDGSENRKDSISNNKTISESPIRKSPIRTGSMDWTNSSLTERKRKDLSDKTTTIRDQIERIRITRDKKTNFLTIDMNISPNETSYSDKRSESQKPIWQVSKRRSTRLLYKWRYFMKSFIERIHRNVFLCMINLPRINTQLFLESTKKIIDKYISNDEKNQSGIDEKNKKKIHFIFISTRKLLSTISNKKTNNSKIHCSLSQAYVFYKLSQKPGIKKYRLGSLFQYRRAYSIKDRIKDYLEIERIFHSESKHKKPGNFGMNEWKNWLIGNYQYNFSYTRWSRLDPQKWRNKVNEQCMIKNKDSKKTDSYSYEKDPLINHERHILYSADLLQNHKKKLSKRYRYDLLSYRYINFGNNSSIYRSLLQVNEEQRILILSSHSHIIHKYEQLNLPAISDYLEERFIVDMEKKTDRKYFDLRIIKFWSRRNTNTDMDLRINTNKKNNTGTNYYQMIDKKDLIYLTSYQEIYPRNKENNFFDWMGMNEELLYRRISNLALWFFPELVLLNDAYKTKPWTIPIRLLLFNGKKKITETQKMNENKKRDLGILSNQKKYLELGTRDREEKKWWDQEDLRPDTKYQEYFGSDVKNQKDVELDVWYREGKSREQEDYTDINKSRKKKQSKSNKEAELDLLLKRYLLFQFRWDDSLKKKMINNIKLYSLLLRLMDPKKIVISSIQRGEMWLDIMLIHKDLPLTKLKKGGVFTMEPLRLSRKWNGQFLMYQTLSISLVHKIKQQTDRRYRETKYIDENFFDLFIPRNGRVFVNGDNKNYDLFVPENISALRRRRELRILSRLNPGKGNINIIFSNRKKIQNCKPFLDRGKHLETDTNKAIKFKLFLWPNHRLEDLACMNRYWFDTNNGTRFSMSRIRMYPRFGIS.

6 helical membrane passes run 23-43 (VVVG…SYLF), 64-84 (FIMG…HLAL), 87-107 (PHTI…WNNH), 124-144 (LSIQ…HFIL), 172-192 (VGWL…LFWI), and 218-238 (ILSI…PSPI). Positions 244-307 (KETSETGETE…REGVNGKEKT (64 aa)) are disordered. Positions 248–258 (ETGETEEETDV) are enriched in acidic residues. Basic and acidic residues-rich tracts occupy residues 259–276 (EIER…KEGS) and 286–307 (SEEK…KEKT).

It belongs to the TIC214 family. Part of the Tic complex.

It localises to the plastid. Its subcellular location is the chloroplast inner membrane. Functionally, involved in protein precursor import into chloroplasts. May be part of an intermediate translocation complex acting as a protein-conducting channel at the inner envelope. The polypeptide is Protein TIC 214 (Amborella trichopoda).